A 65-amino-acid polypeptide reads, in one-letter code: Large ribosomal subunit protein bL35 (65 aa).

The tract at residues 1 to 46 (MPKMKTRQSAAKRYEVTGSGKLRRRRAGKNHLLQHKSAARKRSLST) is disordered. Positions 21 to 44 (KLRRRRAGKNHLLQHKSAARKRSL) are enriched in basic residues.

This sequence belongs to the bacterial ribosomal protein bL35 family.

This is Large ribosomal subunit protein bL35 from Gloeobacter violaceus (strain ATCC 29082 / PCC 7421).